The chain runs to 303 residues: MYYGFDIGGTKIALGVFDSTRRLQWEKRVPTPHTSYSAFLDAVCELVAEADQRLGVKGSVGIGIPGMPETEDGTLYAANVPAASGKPLRADLSARLDRDVRLDNDANCFALSEAWDDEFTQYPLVMGLILGTGVGGGLVLNGKPITGQSYITGEFGHMRLPVDALTLMGFDFPLRRCGCGQMGCIENYLSGRGFAWLYQHYYDQSLQAPEIIALWEQGDEQAHAHVERYLDLLAVCLGNILTIVDPDLLVIGGGLSNFTAITTQLAERLPRHLLPVARAPRIERARHGDAGGMRGAAFLHLTD.

Residues 4-11 and 133-140 each bind ATP; these read GFDIGGTK and GVGGGLVL. Positions 157, 177, 179, and 184 each coordinate Zn(2+).

Belongs to the ROK (NagC/XylR) family. NagK subfamily.

It catalyses the reaction N-acetyl-D-glucosamine + ATP = N-acetyl-D-glucosamine 6-phosphate + ADP + H(+). The protein operates within cell wall biogenesis; peptidoglycan recycling. Its function is as follows. Catalyzes the phosphorylation of N-acetyl-D-glucosamine (GlcNAc) derived from cell-wall degradation, yielding GlcNAc-6-P. In Salmonella gallinarum (strain 287/91 / NCTC 13346), this protein is N-acetyl-D-glucosamine kinase.